The following is a 115-amino-acid chain: UPF0597 protein NTHI1023 (115 aa).

Belongs to the UPF0597 family.

The chain is UPF0597 protein NTHI1023 from Haemophilus influenzae (strain 86-028NP).